Consider the following 334-residue polypeptide: N-acetyl-gamma-glutamyl-phosphate reductase (334 aa).

Cys-154 is a catalytic residue.

This sequence belongs to the NAGSA dehydrogenase family. Type 1 subfamily.

It localises to the cytoplasm. The catalysed reaction is N-acetyl-L-glutamate 5-semialdehyde + phosphate + NADP(+) = N-acetyl-L-glutamyl 5-phosphate + NADPH + H(+). The protein operates within amino-acid biosynthesis; L-arginine biosynthesis; N(2)-acetyl-L-ornithine from L-glutamate: step 3/4. Catalyzes the NADPH-dependent reduction of N-acetyl-5-glutamyl phosphate to yield N-acetyl-L-glutamate 5-semialdehyde. The polypeptide is N-acetyl-gamma-glutamyl-phosphate reductase (Buchnera aphidicola subsp. Schizaphis graminum (strain Sg)).